The following is a 474-amino-acid chain: Glutamate--tRNA ligase (474 aa).

The 'HIGH' region motif lies at 11-21 (PSPTGFLHIGG). A 'KMSKS' region motif is present at residues 240–244 (KLSKR). Residue Lys-243 participates in ATP binding.

The protein belongs to the class-I aminoacyl-tRNA synthetase family. Glutamate--tRNA ligase type 1 subfamily. As to quaternary structure, monomer.

Its subcellular location is the cytoplasm. It carries out the reaction tRNA(Glu) + L-glutamate + ATP = L-glutamyl-tRNA(Glu) + AMP + diphosphate. Its function is as follows. Catalyzes the attachment of glutamate to tRNA(Glu) in a two-step reaction: glutamate is first activated by ATP to form Glu-AMP and then transferred to the acceptor end of tRNA(Glu). This Bradyrhizobium sp. (strain BTAi1 / ATCC BAA-1182) protein is Glutamate--tRNA ligase.